The following is a 171-amino-acid chain: UPF0316 protein Exig_2248 (171 aa).

Transmembrane regions (helical) follow at residues 4 to 24 (ILLILLLQLIYVPVLTLRTIM), 31 to 51 (IIAGVLGTVETLIYIFALGIV), and 57 to 77 (TVGMIVYALGFGLGILIGGFV).

Belongs to the UPF0316 family.

The protein localises to the cell membrane. The protein is UPF0316 protein Exig_2248 of Exiguobacterium sibiricum (strain DSM 17290 / CCUG 55495 / CIP 109462 / JCM 13490 / 255-15).